Reading from the N-terminus, the 101-residue chain is Urease subunit beta (101 aa).

Belongs to the urease beta subunit family. As to quaternary structure, heterotrimer of UreA (gamma), UreB (beta) and UreC (alpha) subunits. Three heterotrimers associate to form the active enzyme.

The protein localises to the cytoplasm. The enzyme catalyses urea + 2 H2O + H(+) = hydrogencarbonate + 2 NH4(+). Its pathway is nitrogen metabolism; urea degradation; CO(2) and NH(3) from urea (urease route): step 1/1. This Burkholderia orbicola (strain MC0-3) protein is Urease subunit beta.